The primary structure comprises 367 residues: Aminomethyltransferase (367 aa).

It belongs to the GcvT family. As to quaternary structure, the glycine cleavage system is composed of four proteins: P, T, L and H.

The catalysed reaction is N(6)-[(R)-S(8)-aminomethyldihydrolipoyl]-L-lysyl-[protein] + (6S)-5,6,7,8-tetrahydrofolate = N(6)-[(R)-dihydrolipoyl]-L-lysyl-[protein] + (6R)-5,10-methylene-5,6,7,8-tetrahydrofolate + NH4(+). In terms of biological role, the glycine cleavage system catalyzes the degradation of glycine. This chain is Aminomethyltransferase, found in Mycolicibacterium paratuberculosis (strain ATCC BAA-968 / K-10) (Mycobacterium paratuberculosis).